A 225-amino-acid polypeptide reads, in one-letter code: UPF0758 protein BP1235 (225 aa).

The region spanning 103 to 225 (ALANPDLVRR…TVSMAAQGHL (123 aa)) is the MPN domain. 3 residues coordinate Zn(2+): histidine 174, histidine 176, and aspartate 187. The JAMM motif motif lies at 174 to 187 (HNHPGGTAAASAAD).

This sequence belongs to the UPF0758 family.

This chain is UPF0758 protein BP1235, found in Bordetella pertussis (strain Tohama I / ATCC BAA-589 / NCTC 13251).